A 147-amino-acid polypeptide reads, in one-letter code: Peptide deformylase 1 (147 aa).

Fe cation is bound by residues Cys90 and His132. Glu133 is a catalytic residue. His136 is a Fe cation binding site.

This sequence belongs to the polypeptide deformylase family. It depends on Fe(2+) as a cofactor.

It catalyses the reaction N-terminal N-formyl-L-methionyl-[peptide] + H2O = N-terminal L-methionyl-[peptide] + formate. Removes the formyl group from the N-terminal Met of newly synthesized proteins. Requires at least a dipeptide for an efficient rate of reaction. N-terminal L-methionine is a prerequisite for activity but the enzyme has broad specificity at other positions. The protein is Peptide deformylase 1 of Clostridium perfringens (strain 13 / Type A).